A 195-amino-acid polypeptide reads, in one-letter code: Imidazoleglycerol-phosphate dehydratase (195 aa).

It belongs to the imidazoleglycerol-phosphate dehydratase family.

It is found in the cytoplasm. The enzyme catalyses D-erythro-1-(imidazol-4-yl)glycerol 3-phosphate = 3-(imidazol-4-yl)-2-oxopropyl phosphate + H2O. Its pathway is amino-acid biosynthesis; L-histidine biosynthesis; L-histidine from 5-phospho-alpha-D-ribose 1-diphosphate: step 6/9. The sequence is that of Imidazoleglycerol-phosphate dehydratase from Roseobacter denitrificans (strain ATCC 33942 / OCh 114) (Erythrobacter sp. (strain OCh 114)).